Here is a 212-residue protein sequence, read N- to C-terminus: uncharacterized protein (212 aa).

Positions 1 to 88 are disordered; that stretch reads MAEEQKIALE…PAPAKPASAS (88 aa). A Phosphoserine modification is found at Ser13. Over residues 23–41 the composition is skewed to pro residues; sequence ADTPAPAPAEIPAPAPAPT. The segment covering 45-54 has biased composition (basic and acidic residues); the sequence is VTKDVAEEKI.

It belongs to the remorin family.

The protein localises to the cell membrane. This is an uncharacterized protein from Arabidopsis thaliana (Mouse-ear cress).